Consider the following 388-residue polypeptide: Flavin-dependent monooxygenase (388 aa).

FAD is bound by residues 12–15 (VGVA), 34–36 (EKS), 44–47 (QALD), R105, Y267, D289, and 296–302 (PLSGQGN).

This sequence belongs to the aromatic-ring hydroxylase family. FAD is required as a cofactor.

The catalysed reaction is a tetracycline + NADPH + O2 + H(+) = a (1S,10aS)-3-(CONH2)-1-(Me2N)-3,3a,4,6-(HO)4-2,5-dioxo-1H,10aH,11H,11aH-cyclopenta[b]anthracene + CO + NADP(+) + H2O. It carries out the reaction 7-chlorotetracycline + NADPH + O2 + H(+) = (1S,10S,10aS)-3-(CONH2)-9-Cl-1-(Me2N)-3,3a,4,10-(HO)4-10-Me-2,5-dioxo-1H,10aH,11H,11aH-cyclopenta[b]anthracen-6-olate + CO + NADP(+) + H2O. Inhibited by anhydrotetracycline. In terms of biological role, an FAD-requiring monooxygenase active on tetracycline antibiotic and some of its derivatives, which leads to their inactivation. Expression in E.coli confers high resistance to tetracycline and oxytetracycline, does not confer resistance to minocycline or tigecycline. Degrades tetracycline and oxytetracycline; the reaction requires NADPH. Degrades and confers resistance to chlortetracycline. The polypeptide is Flavin-dependent monooxygenase (tet(50)) (Unknown prokaryotic organism).